Reading from the N-terminus, the 391-residue chain is S-adenosylmethionine synthase (391 aa).

Position 16 (histidine 16) interacts with ATP. Residue aspartate 18 coordinates Mg(2+). Glutamate 44 is a K(+) binding site. Residues glutamate 57 and glutamine 101 each coordinate L-methionine. The interval 101 to 111 (QSADIAQGVDA) is flexible loop. Residues 166-168 (DAK), aspartate 244, 250-251 (RK), alanine 267, and lysine 271 each bind ATP. Aspartate 244 is an L-methionine binding site. Residue lysine 275 participates in L-methionine binding.

Belongs to the AdoMet synthase family. As to quaternary structure, homotetramer; dimer of dimers. It depends on Mg(2+) as a cofactor. K(+) serves as cofactor.

It localises to the cytoplasm. It carries out the reaction L-methionine + ATP + H2O = S-adenosyl-L-methionine + phosphate + diphosphate. Its pathway is amino-acid biosynthesis; S-adenosyl-L-methionine biosynthesis; S-adenosyl-L-methionine from L-methionine: step 1/1. Functionally, catalyzes the formation of S-adenosylmethionine (AdoMet) from methionine and ATP. The overall synthetic reaction is composed of two sequential steps, AdoMet formation and the subsequent tripolyphosphate hydrolysis which occurs prior to release of AdoMet from the enzyme. The sequence is that of S-adenosylmethionine synthase from Zymomonas mobilis subsp. mobilis (strain ATCC 31821 / ZM4 / CP4).